The primary structure comprises 779 residues: MIISRPLCGFVFAGLSFAVILPAQALVAADNQAARAEIRRTGFGVPHIVAANERGLGYGIGYAYAQDNLCLLANEVVTVNGERSRYFGPDKATLEQRSNMASDLLFKWLNTPEALADFWKAQPPEIRQLMQGYVAGYNRSLDEQKTKGLPRPCAADWVRPISTDDLLRLTRRLLVEGGVGQFTEAFAGAKPPSAQKPLQVDSQQVQALQLAAVRNQRFALERGSNAVAVGHELSANGRGMLLANPHFPWGGGMRFYQMHLTIPGKLDVMGAALPGLPLINIGFNRHLAWSHTVDTSKHFTLHRLQLDPKDSTRYLLDGKSIAMGQQQVSVEVKQPDGSLKDVPRIIYSSKFGPVVQWPGKLDWDDKFAFSLRDANLENDRVLQQWYSMDKADSLKAFQDSLHKIQGIPWVNTLAVDAKGQALYMNLSVVPNVDAAKLAKCSDPRIGTELIVLDGSRSECNWDISAEAAQAGIYPSSRQPQLLRSDFVQHSNDSAWMVNPAAPLKGFSPLISQDGQPLGQRARFALDRLGSLQQAGKVSAENLQAMVMDNEVYQAGQVLPDLLKFCASELGDDVARLTPLCAALKAWDGRADLNSGIGFVYFQRIMTSMQGVASRWRVVFDPQNPIHTPSGLAIENPQVASALRAAMLAAVDEVAKAGLSPESKWGDIQVSSLSGKPIPIHGGPAGLGVYNAMQTIAGKDGKREVVSGTSYLQVVTFDEQGPRAQGLLAFSESSNPQSAHSSDQTEAFSKKQWSELPFTEQQIKADPAYQVQVISEEGSR.

A signal peptide spans 1-25; that stretch reads MIISRPLCGFVFAGLSFAVILPAQA. Residues 202–223 constitute a propeptide, spacer peptide; it reads SQQVQALQLAAVRNQRFALERG. Ser224 acts as the Nucleophile in catalysis. The segment covering 731-746 has biased composition (polar residues); that stretch reads ESSNPQSAHSSDQTEA. The segment at 731-752 is disordered; that stretch reads ESSNPQSAHSSDQTEAFSKKQW.

It belongs to the peptidase S45 family. As to quaternary structure, heterodimer of an alpha subunit and a beta subunit processed from the same precursor.

The protein resides in the periplasm. It catalyses the reaction an N-acyl-L-homoserine lactone + H2O = L-homoserine lactone + a carboxylate. Catalyzes the deacylation of acyl-homoserine lactone (AHL or acyl-HSL), releasing homoserine lactone (HSL) and the corresponding fatty acid. Possesses a specificity for the degradation of long-chain acyl-HSLs (side chains of 11 to 14 carbons in length). The chain is Acyl-homoserine lactone acylase PvdQ (pvdQ) from Pseudomonas savastanoi pv. phaseolicola (strain 1448A / Race 6) (Pseudomonas syringae pv. phaseolicola (strain 1448A / Race 6)).